Reading from the N-terminus, the 171-residue chain is Lipoprotein signal peptidase (171 aa).

Helical transmembrane passes span 12-32 (LAWL…KLYF), 42-62 (IVVI…AAFS), 70-90 (WQRW…VVWL), and 96-116 (NETW…GNLY). Active-site residues include D126 and D145. A helical transmembrane segment spans residues 137–157 (YFPAFNVADSAITVGAVMLAL).

It belongs to the peptidase A8 family.

Its subcellular location is the cell inner membrane. The catalysed reaction is Release of signal peptides from bacterial membrane prolipoproteins. Hydrolyzes -Xaa-Yaa-Zaa-|-(S,diacylglyceryl)Cys-, in which Xaa is hydrophobic (preferably Leu), and Yaa (Ala or Ser) and Zaa (Gly or Ala) have small, neutral side chains.. The protein operates within protein modification; lipoprotein biosynthesis (signal peptide cleavage). In terms of biological role, this protein specifically catalyzes the removal of signal peptides from prolipoproteins. The polypeptide is Lipoprotein signal peptidase (Pseudomonas putida (strain ATCC 47054 / DSM 6125 / CFBP 8728 / NCIMB 11950 / KT2440)).